The following is a 109-amino-acid chain: Flagellar transcriptional regulator FlhD (109 aa).

The protein belongs to the FlhD family. As to quaternary structure, homodimer; disulfide-linked. Forms a heterohexamer composed of two FlhC and four FlhD subunits. Each FlhC binds a FlhD dimer, forming a heterotrimer, and a hexamer assembles by dimerization of two heterotrimers.

Its subcellular location is the cytoplasm. Functions in complex with FlhC as a master transcriptional regulator that regulates transcription of several flagellar and non-flagellar operons by binding to their promoter region. Activates expression of class 2 flagellar genes, including fliA, which is a flagellum-specific sigma factor that turns on the class 3 genes. Also regulates genes whose products function in a variety of physiological pathways. The sequence is that of Flagellar transcriptional regulator FlhD from Acidovorax sp. (strain JS42).